The chain runs to 195 residues: Guanylate kinase (195 aa).

Residues 10-189 enclose the Guanylate kinase-like domain; that stretch reads GRLIVFSAPS…TVDAVATRIA (180 aa). 17-24 lines the ATP pocket; that stretch reads APSGTGKS.

Belongs to the guanylate kinase family.

It is found in the cytoplasm. The enzyme catalyses GMP + ATP = GDP + ADP. In terms of biological role, essential for recycling GMP and indirectly, cGMP. The protein is Guanylate kinase of Chlorobaculum tepidum (strain ATCC 49652 / DSM 12025 / NBRC 103806 / TLS) (Chlorobium tepidum).